We begin with the raw amino-acid sequence, 218 residues long: Cytochrome b6 (218 aa).

The chain crosses the membrane as a helical span at residues 35-55; it reads IFYCLGGITLVCFLIQFATGF. Cys38 lines the heme c pocket. Residues His89 and His103 each coordinate heme b. Helical transmembrane passes span 93–113, 119–139, and 189–209; these read ASMM…TGGF, LTWV…VTGY, and LHTF…FLMI. 2 residues coordinate heme b: His190 and His205.

It belongs to the cytochrome b family. PetB subfamily. In terms of assembly, the 4 large subunits of the cytochrome b6-f complex are cytochrome b6, subunit IV (17 kDa polypeptide, PetD), cytochrome f and the Rieske protein, while the 4 small subunits are PetG, PetL, PetM and PetN. The complex functions as a dimer. The cofactor is heme b. Requires heme c as cofactor.

The protein resides in the cellular thylakoid membrane. In terms of biological role, component of the cytochrome b6-f complex, which mediates electron transfer between photosystem II (PSII) and photosystem I (PSI), cyclic electron flow around PSI, and state transitions. This is Cytochrome b6 from Synechococcus sp. (strain CC9605).